We begin with the raw amino-acid sequence, 99 residues long: MSSQQSAVSAKGFSKGSSQGPAPCPAPAPTPAPASSSSCCGSGRGCCGDSGCCGSSSTSCCCFPRRRRRQRSSGCCCCGGGSQRSQRSNNRSSGCCSGC.

Disordered stretches follow at residues M1–S42 and R65–C99. Pro residues predominate over residues A22 to A32. Over residues Q83–C99 the composition is skewed to low complexity.

The chain is Cysteine-rich C-terminal protein 1 (CRCT1) from Homo sapiens (Human).